The primary structure comprises 494 residues: Cysteine--tRNA ligase (494 aa).

Cysteine 29 is a Zn(2+) binding site. Positions 31-41 match the 'HIGH' region motif; sequence VTVYDHCHIGH. The Zn(2+) site is built by cysteine 209, histidine 234, and glutamate 238. A 'KMSKS' region motif is present at residues 266-270; it reads KMSKS. Residue lysine 269 participates in ATP binding.

Belongs to the class-I aminoacyl-tRNA synthetase family. In terms of assembly, monomer. Zn(2+) serves as cofactor.

It localises to the cytoplasm. The catalysed reaction is tRNA(Cys) + L-cysteine + ATP = L-cysteinyl-tRNA(Cys) + AMP + diphosphate. This Geotalea daltonii (strain DSM 22248 / JCM 15807 / FRC-32) (Geobacter daltonii) protein is Cysteine--tRNA ligase.